We begin with the raw amino-acid sequence, 226 residues long: UPF0758 protein Sca_1264 (226 aa).

Positions 102 to 224 (KITSPQDAAD…YLSMVEGGYF (123 aa)) constitute an MPN domain. Zn(2+) is bound by residues His-173, His-175, and Asp-186. Residues 173-186 (HNHPSGDVTPSKED) carry the JAMM motif motif.

Belongs to the UPF0758 family.

The protein is UPF0758 protein Sca_1264 of Staphylococcus carnosus (strain TM300).